The following is a 195-amino-acid chain: Molybdenum cofactor guanylyltransferase (195 aa).

GTP contacts are provided by residues 10–12 (LAG), K23, N51, D69, and D99. Position 99 (D99) interacts with Mg(2+).

It belongs to the MobA family. In terms of assembly, monomer. Requires Mg(2+) as cofactor.

It is found in the cytoplasm. It catalyses the reaction Mo-molybdopterin + GTP + H(+) = Mo-molybdopterin guanine dinucleotide + diphosphate. Functionally, transfers a GMP moiety from GTP to Mo-molybdopterin (Mo-MPT) cofactor (Moco or molybdenum cofactor) to form Mo-molybdopterin guanine dinucleotide (Mo-MGD) cofactor. The sequence is that of Molybdenum cofactor guanylyltransferase from Histophilus somni (strain 129Pt) (Haemophilus somnus).